We begin with the raw amino-acid sequence, 129 residues long: UPF0102 protein CPS_4433 (129 aa).

Belongs to the UPF0102 family.

This Colwellia psychrerythraea (strain 34H / ATCC BAA-681) (Vibrio psychroerythus) protein is UPF0102 protein CPS_4433.